We begin with the raw amino-acid sequence, 427 residues long: Glutamate-1-semialdehyde 2,1-aminomutase (427 aa).

Lysine 265 is subject to N6-(pyridoxal phosphate)lysine.

It belongs to the class-III pyridoxal-phosphate-dependent aminotransferase family. HemL subfamily. In terms of assembly, homodimer. Requires pyridoxal 5'-phosphate as cofactor.

The protein localises to the cytoplasm. The enzyme catalyses (S)-4-amino-5-oxopentanoate = 5-aminolevulinate. Its pathway is porphyrin-containing compound metabolism; protoporphyrin-IX biosynthesis; 5-aminolevulinate from L-glutamyl-tRNA(Glu): step 2/2. The protein is Glutamate-1-semialdehyde 2,1-aminomutase of Pseudomonas fluorescens (strain SBW25).